The sequence spans 344 residues: 3-dehydroquinate synthase (344 aa).

Residues 60–65 (DGEEYK), 94–98 (GVISD), 118–119 (TT), Lys131, Lys140, and 158–161 (FLNT) each bind NAD(+). Residues Glu173, His232, and His249 each coordinate Zn(2+).

It belongs to the sugar phosphate cyclases superfamily. Dehydroquinate synthase family. The cofactor is Co(2+). Zn(2+) serves as cofactor. Requires NAD(+) as cofactor.

It localises to the cytoplasm. It carries out the reaction 7-phospho-2-dehydro-3-deoxy-D-arabino-heptonate = 3-dehydroquinate + phosphate. It participates in metabolic intermediate biosynthesis; chorismate biosynthesis; chorismate from D-erythrose 4-phosphate and phosphoenolpyruvate: step 2/7. Catalyzes the conversion of 3-deoxy-D-arabino-heptulosonate 7-phosphate (DAHP) to dehydroquinate (DHQ). This is 3-dehydroquinate synthase from Campylobacter hominis (strain ATCC BAA-381 / DSM 21671 / CCUG 45161 / LMG 19568 / NCTC 13146 / CH001A).